A 475-amino-acid chain; its full sequence is Methylenetetrahydrofolate--tRNA-(uracil-5-)-methyltransferase TrmFO (475 aa).

Position 9–14 (9–14 (GGGLAG)) interacts with FAD. A disordered region spans residues 427-447 (APRNETGRRLRGPEKAALKKR).

This sequence belongs to the MnmG family. TrmFO subfamily. The cofactor is FAD.

The protein resides in the cytoplasm. The enzyme catalyses uridine(54) in tRNA + (6R)-5,10-methylene-5,6,7,8-tetrahydrofolate + NADH + H(+) = 5-methyluridine(54) in tRNA + (6S)-5,6,7,8-tetrahydrofolate + NAD(+). The catalysed reaction is uridine(54) in tRNA + (6R)-5,10-methylene-5,6,7,8-tetrahydrofolate + NADPH + H(+) = 5-methyluridine(54) in tRNA + (6S)-5,6,7,8-tetrahydrofolate + NADP(+). Catalyzes the folate-dependent formation of 5-methyl-uridine at position 54 (M-5-U54) in all tRNAs. This chain is Methylenetetrahydrofolate--tRNA-(uracil-5-)-methyltransferase TrmFO, found in Methylobacterium radiotolerans (strain ATCC 27329 / DSM 1819 / JCM 2831 / NBRC 15690 / NCIMB 10815 / 0-1).